The following is a 330-amino-acid chain: Fructose-1,6-bisphosphatase class 1 (330 aa).

E84, D103, L105, and D106 together coordinate Mg(2+). Residues D106 to S109, N196, and K262 each bind substrate. E268 is a Mg(2+) binding site.

This sequence belongs to the FBPase class 1 family. As to quaternary structure, homotetramer. It depends on Mg(2+) as a cofactor.

It is found in the cytoplasm. The catalysed reaction is beta-D-fructose 1,6-bisphosphate + H2O = beta-D-fructose 6-phosphate + phosphate. It functions in the pathway carbohydrate biosynthesis; gluconeogenesis. This chain is Fructose-1,6-bisphosphatase class 1, found in Shewanella sp. (strain ANA-3).